The primary structure comprises 237 residues: MDIKLKDFEGPLDLLLHLVSKYEVDIYDVPIVEVIEQYLAYLATLQAMKLEVAGEYMLMASQLMLIKSRKLLPTVVEDEPEVDDPELELLSQLEEYAHFKAASQVLAKKHEVRAQYFSKPKVELVYEDVTLNQDKTIQDIFLAFSKIMAEKQEEIRRRHTTIARDDYKIEDMMLIIEEAFSAKNKLFLDELFSDAKDMNQVITLFLATLELIKIHRISVQQETIFGTITLRKEWTNE.

Belongs to the ScpA family. Component of a cohesin-like complex composed of ScpA, ScpB and the Smc homodimer, in which ScpA and ScpB bind to the head domain of Smc. The presence of the three proteins is required for the association of the complex with DNA.

It localises to the cytoplasm. In terms of biological role, participates in chromosomal partition during cell division. May act via the formation of a condensin-like complex containing Smc and ScpB that pull DNA away from mid-cell into both cell halves. This Streptococcus thermophilus (strain CNRZ 1066) protein is Segregation and condensation protein A.